Consider the following 647-residue polypeptide: XK-related protein 4 (647 aa).

Basic and acidic residues predominate over residues M1 to S15. The segment at M1–A44 is disordered. Over residues P21–V31 the composition is skewed to polar residues. The next 2 membrane-spanning stretches (helical) occupy residues W112 to V132 and W142 to F162. S197 carries the phosphoserine modification. Residues S197–G238 form a disordered region. Positions S207–T236 are enriched in polar residues. 8 consecutive transmembrane segments (helical) span residues C245 to W265, H303 to V323, L328 to A348, K362 to A382, V393 to H415, W425 to V445, L454 to L474, and F484 to L504.

It belongs to the XK family. As to quaternary structure, homodimer; homodimerization takes place upon caspase cleavage. Interacts with the processed C-terminus of XRCC4 (protein XRCC4, C-terminus); interaction promotes the phospholipid scramblase activity. Undergoes proteolytic processing by caspase-3 (CASP3), caspase-6 (CASP6) and caspase-7 (CASP7) to generate the XK-related protein 4, processed form, leading to its activation. As to expression, highly expressed in expressed in the brain; weakly expressed in the spleen, thymus, uterus, blood vessels and fetus.

The protein resides in the cell membrane. The enzyme catalyses a 1,2-diacyl-sn-glycero-3-phospho-L-serine(in) = a 1,2-diacyl-sn-glycero-3-phospho-L-serine(out). With respect to regulation, phospholipid scramblase activity is activated upon caspase cleavage to generate the XK-related protein 4, processed form. Does not act prior the onset of apoptosis. Its activity is regulated as follows. Homodimerizes upon caspase cleavage. Phospholipid scramblase activity is activated following interaction with the processed C-terminus of XRCC4 (protein XRCC4, C-terminus). Functionally, phospholipid scramblase that promotes phosphatidylserine exposure on apoptotic cell surface. Phosphatidylserine is a specific marker only present at the surface of apoptotic cells and acts as a specific signal for engulfment. The protein is XK-related protein 4 of Mus musculus (Mouse).